The sequence spans 136 residues: Secreted RxLR effector protein 15 (136 aa).

The signal sequence occupies residues 1-22 (MRGHSALMMAVVTLAAVSSGAA). A RxLR motif is present at residues 47–50 (RLLR).

Belongs to the RxLR effector family.

The protein resides in the secreted. It is found in the host nucleus. The protein localises to the host cytoplasm. Functionally, effector that completely suppresses the host cell death induced by cell death-inducing proteins. This chain is Secreted RxLR effector protein 15, found in Plasmopara viticola (Downy mildew of grapevine).